A 37-amino-acid polypeptide reads, in one-letter code: Large ribosomal subunit protein bL36 (37 aa).

The protein belongs to the bacterial ribosomal protein bL36 family.

The sequence is that of Large ribosomal subunit protein bL36 from Halalkalibacterium halodurans (strain ATCC BAA-125 / DSM 18197 / FERM 7344 / JCM 9153 / C-125) (Bacillus halodurans).